The sequence spans 156 residues: MPRKGHIAKRDVLPDPLYNSKVVTKLINSIMLDGKRGVAQKICYDAFEIIAEKSGKDAMEVFETAMNNIMPLLEVKARRIGGATYQVPIEVRPERRQTLGIRWMLIAARKRGERSMRERLAGELLDASNNTGAAVKKREDTHKMAEANKAFAHYRY.

This sequence belongs to the universal ribosomal protein uS7 family. Part of the 30S ribosomal subunit. Contacts proteins S9 and S11.

In terms of biological role, one of the primary rRNA binding proteins, it binds directly to 16S rRNA where it nucleates assembly of the head domain of the 30S subunit. Is located at the subunit interface close to the decoding center, probably blocks exit of the E-site tRNA. In Clostridium botulinum (strain Kyoto / Type A2), this protein is Small ribosomal subunit protein uS7.